The sequence spans 250 residues: Small ribosomal subunit protein uS2 (250 aa).

Belongs to the universal ribosomal protein uS2 family.

The protein is Small ribosomal subunit protein uS2 of Paraburkholderia phytofirmans (strain DSM 17436 / LMG 22146 / PsJN) (Burkholderia phytofirmans).